The primary structure comprises 872 residues: Valine--tRNA ligase (872 aa).

Positions 45 to 55 (PYPTGNLHIGN) match the 'HIGH' region motif. Residues 524-528 (KMSKS) carry the 'KMSKS' region motif. K527 lines the ATP pocket.

Belongs to the class-I aminoacyl-tRNA synthetase family. ValS type 2 subfamily.

It is found in the cytoplasm. The catalysed reaction is tRNA(Val) + L-valine + ATP = L-valyl-tRNA(Val) + AMP + diphosphate. Catalyzes the attachment of valine to tRNA(Val). As ValRS can inadvertently accommodate and process structurally similar amino acids such as threonine, to avoid such errors, it has a 'posttransfer' editing activity that hydrolyzes mischarged Thr-tRNA(Val) in a tRNA-dependent manner. In Natronomonas pharaonis (strain ATCC 35678 / DSM 2160 / CIP 103997 / JCM 8858 / NBRC 14720 / NCIMB 2260 / Gabara) (Halobacterium pharaonis), this protein is Valine--tRNA ligase.